A 967-amino-acid polypeptide reads, in one-letter code: Alanine--tRNA ligase, cytoplasmic (967 aa).

Zn(2+)-binding residues include His-605, His-609, Cys-724, and His-728.

This sequence belongs to the class-II aminoacyl-tRNA synthetase family. As to quaternary structure, monomer. Zn(2+) is required as a cofactor. Post-translationally, the N-terminus is blocked.

It localises to the cytoplasm. The enzyme catalyses tRNA(Ala) + L-alanine + ATP = L-alanyl-tRNA(Ala) + AMP + diphosphate. In terms of biological role, catalyzes the attachment of alanine to tRNA(Ala) in a two-step reaction: alanine is first activated by ATP to form Ala-AMP and then transferred to the acceptor end of tRNA(Ala). Also edits incorrectly charged tRNA(Ala) via its editing domain. In Bombyx mori (Silk moth), this protein is Alanine--tRNA ligase, cytoplasmic.